We begin with the raw amino-acid sequence, 309 residues long: Probable lipid kinase YegS-like (309 aa).

Residues 1–134 enclose the DAGKc domain; the sequence is MAPSHWRLIL…VDLLRIDADH (134 aa). Residues Thr39, 65 to 71, and Thr96 each bind ATP; that span reads GDGTLSE. Residues Leu219, Asp222, and Leu224 each coordinate Mg(2+). The active-site Proton acceptor is Glu280.

It belongs to the diacylglycerol/lipid kinase family. YegS lipid kinase subfamily. The cofactor is Mg(2+). Requires Ca(2+) as cofactor.

The protein localises to the cytoplasm. Its function is as follows. Probably phosphorylates lipids; the in vivo substrate is unknown. In Xanthomonas axonopodis pv. citri (strain 306), this protein is Probable lipid kinase YegS-like.